A 1218-amino-acid polypeptide reads, in one-letter code: Coatomer subunit alpha-1 (1218 aa).

WD repeat units lie at residues 7 to 48, 49 to 88, 91 to 132, 133 to 172, 202 to 241, 246 to 285, 288 to 326, 363 to 404, and 450 to 489; these read TKSN…DRFD, EHDG…CLFT, GHLD…AVLT, GHNH…KKTV, GHDR…AWEV, GHMN…GIQT, REHD…PAFS, SLNQ…AGRA, and PLPI…GELQ. Residues 857-882 form a disordered region; the sequence is NGGDGFDAEEGEANEEDGEEGGWDLE. A compositionally biased stretch (acidic residues) spans 862–882; it reads FDAEEGEANEEDGEEGGWDLE.

In terms of assembly, oligomeric complex that consists of at least the alpha, beta, beta', gamma, delta, epsilon and zeta subunits.

It localises to the cytoplasm. The protein localises to the golgi apparatus membrane. The protein resides in the cytoplasmic vesicle. Its subcellular location is the COPI-coated vesicle membrane. Its function is as follows. The coatomer is a cytosolic protein complex that binds to dilysine motifs and reversibly associates with Golgi non-clathrin-coated vesicles, which further mediate biosynthetic protein transport from the ER, via the Golgi up to the trans Golgi network. Coatomer complex is required for budding from Golgi membranes, and is essential for the retrograde Golgi-to-ER transport of dilysine-tagged proteins. This Oryza sativa subsp. japonica (Rice) protein is Coatomer subunit alpha-1.